A 377-amino-acid chain; its full sequence is Spermidine/putrescine import ATP-binding protein PotA (377 aa).

One can recognise an ABC transporter domain in the interval 18 to 248 (IRLSGISKSF…PKNLFVARFI (231 aa)). 50-57 (GPSGCGKT) provides a ligand contact to ATP.

The protein belongs to the ABC transporter superfamily. Spermidine/putrescine importer (TC 3.A.1.11.1) family. The complex is composed of two ATP-binding proteins (PotA), two transmembrane proteins (PotB and PotC) and a solute-binding protein (PotD).

The protein localises to the cell inner membrane. It carries out the reaction ATP + H2O + polyamine-[polyamine-binding protein]Side 1 = ADP + phosphate + polyamineSide 2 + [polyamine-binding protein]Side 1.. In terms of biological role, part of the ABC transporter complex PotABCD involved in spermidine/putrescine import. Responsible for energy coupling to the transport system. In Vibrio vulnificus (strain CMCP6), this protein is Spermidine/putrescine import ATP-binding protein PotA.